We begin with the raw amino-acid sequence, 201 residues long: Recombination protein RecR (201 aa).

The C4-type zinc-finger motif lies at 60–75 (CKVCGNIDTQNPCTVC). The 96-residue stretch at 83–178 (SIIVVVADVA…KVTRLAHGVP (96 aa)) folds into the Toprim domain.

This sequence belongs to the RecR family.

Its function is as follows. May play a role in DNA repair. It seems to be involved in an RecBC-independent recombinational process of DNA repair. It may act with RecF and RecO. In Rhodopseudomonas palustris (strain BisB18), this protein is Recombination protein RecR.